The following is a 317-amino-acid chain: Nuclear distribution protein nudE homolog (317 aa).

Residues 29-180 (TDVKQEYDEF…LKQELNVKSR (152 aa)) adopt a coiled-coil conformation. The disordered stretch occupies residues 186-205 (NGTSVPTANDTNTVNSSMNS).

The protein belongs to the nudE family.

Its subcellular location is the cytoplasm. It localises to the cytoskeleton. The protein resides in the microtubule organizing center. The protein localises to the centrosome. It is found in the spindle. Functionally, chaperone protein with functions in nuclear localization. Required for centrosome duplication and formation and function of the mitotic spindle. In postmitotic neurons, acts with nudC downstream of dar1 to ensure correct positioning of the nuclei in primary dendrites and as a consequence, is required for determining multipolar neuron morphology. The protein is Nuclear distribution protein nudE homolog of Drosophila melanogaster (Fruit fly).